The sequence spans 517 residues: C-22 sterol desaturase ERG5 (517 aa).

The chain crosses the membrane as a helical span at residues 21-41; that stretch reads LAVAKATGSPITTLFTIIFLI. Position 458 (cysteine 458) interacts with heme.

This sequence belongs to the cytochrome P450 family. Requires heme as cofactor.

It is found in the endoplasmic reticulum membrane. It carries out the reaction 5-dehydroepisterol + NADPH + O2 + H(+) = ergosta-5,7,22,24(28)-tetraen-3beta-ol + NADP(+) + 2 H2O. Its pathway is steroid metabolism; ergosterol biosynthesis; ergosterol from zymosterol: step 4/5. In terms of biological role, C-22 sterol desaturase; part of the third module of ergosterol biosynthesis pathway that includes the late steps of the pathway. ERG5 converts 5-dehydroepisterol into ergosta-5,7,22,24(28)-tetraen-3beta-ol by forming the C-22(23) double bond in the sterol side chain. The third module or late pathway involves the ergosterol synthesis itself through consecutive reactions that mainly occur in the endoplasmic reticulum (ER) membrane. Firstly, the squalene synthase ERG9 catalyzes the condensation of 2 farnesyl pyrophosphate moieties to form squalene, which is the precursor of all steroids. Squalene synthase is crucial for balancing the incorporation of farnesyl diphosphate (FPP) into sterol and nonsterol isoprene synthesis. Secondly, the squalene epoxidase ERG1 catalyzes the stereospecific oxidation of squalene to (S)-2,3-epoxysqualene, which is considered to be a rate-limiting enzyme in steroid biosynthesis. Then, the lanosterol synthase ERG7 catalyzes the cyclization of (S)-2,3 oxidosqualene to lanosterol, a reaction that forms the sterol core. In the next steps, lanosterol is transformed to zymosterol through a complex process involving various demethylation, reduction and desaturation reactions. The lanosterol 14-alpha-demethylase ERG11 (also known as CYP51) catalyzes C14-demethylation of lanosterol to produce 4,4'-dimethyl cholesta-8,14,24-triene-3-beta-ol, which is critical for ergosterol biosynthesis. The C-14 reductase ERG24 reduces the C14=C15 double bond of 4,4-dimethyl-cholesta-8,14,24-trienol to produce 4,4-dimethyl-cholesta-8,24-dienol. 4,4-dimethyl-cholesta-8,24-dienol is substrate of the C-4 demethylation complex ERG25-ERG26-ERG27 in which ERG25 catalyzes the three-step monooxygenation required for the demethylation of 4,4-dimethyl and 4alpha-methylsterols, ERG26 catalyzes the oxidative decarboxylation that results in a reduction of the 3-beta-hydroxy group at the C-3 carbon to an oxo group, and ERG27 is responsible for the reduction of the keto group on the C-3. ERG28 has a role as a scaffold to help anchor ERG25, ERG26 and ERG27 to the endoplasmic reticulum and ERG29 regulates the activity of the iron-containing C4-methylsterol oxidase ERG25. Then, the sterol 24-C-methyltransferase ERG6 catalyzes the methyl transfer from S-adenosyl-methionine to the C-24 of zymosterol to form fecosterol. The C-8 sterol isomerase ERG2 catalyzes the reaction which results in unsaturation at C-7 in the B ring of sterols and thus converts fecosterol to episterol. The sterol-C5-desaturase ERG3 then catalyzes the introduction of a C-5 double bond in the B ring to produce 5-dehydroepisterol. The C-22 sterol desaturase ERG5 further converts 5-dehydroepisterol into ergosta-5,7,22,24(28)-tetraen-3beta-ol by forming the C-22(23) double bond in the sterol side chain. Finally, ergosta-5,7,22,24(28)-tetraen-3beta-ol is substrate of the C-24(28) sterol reductase ERG4 to produce ergosterol. This chain is C-22 sterol desaturase ERG5, found in Candida albicans (strain SC5314 / ATCC MYA-2876) (Yeast).